The primary structure comprises 164 residues: Putative 4-hydroxy-4-methyl-2-oxoglutarate aldolase (164 aa).

Substrate is bound by residues 75 to 78 (GDLI) and R97. D98 contributes to the a divalent metal cation binding site.

This sequence belongs to the class II aldolase/RraA-like family. In terms of assembly, homotrimer. A divalent metal cation is required as a cofactor.

It carries out the reaction 4-hydroxy-4-methyl-2-oxoglutarate = 2 pyruvate. The enzyme catalyses oxaloacetate + H(+) = pyruvate + CO2. In terms of biological role, catalyzes the aldol cleavage of 4-hydroxy-4-methyl-2-oxoglutarate (HMG) into 2 molecules of pyruvate. Also contains a secondary oxaloacetate (OAA) decarboxylase activity due to the common pyruvate enolate transition state formed following C-C bond cleavage in the retro-aldol and decarboxylation reactions. This is Putative 4-hydroxy-4-methyl-2-oxoglutarate aldolase from Shewanella oneidensis (strain ATCC 700550 / JCM 31522 / CIP 106686 / LMG 19005 / NCIMB 14063 / MR-1).